A 188-amino-acid polypeptide reads, in one-letter code: Elongation factor P (188 aa).

The protein belongs to the elongation factor P family.

Its subcellular location is the cytoplasm. Its pathway is protein biosynthesis; polypeptide chain elongation. In terms of biological role, involved in peptide bond synthesis. Stimulates efficient translation and peptide-bond synthesis on native or reconstituted 70S ribosomes in vitro. Probably functions indirectly by altering the affinity of the ribosome for aminoacyl-tRNA, thus increasing their reactivity as acceptors for peptidyl transferase. This Chlorobaculum parvum (strain DSM 263 / NCIMB 8327) (Chlorobium vibrioforme subsp. thiosulfatophilum) protein is Elongation factor P.